The sequence spans 520 residues: Signal peptide peptidase-like 2A (520 aa).

The first 25 residues, M1–A25, serve as a signal peptide directing secretion. Residues Q26–M172 are Lumenal-facing. Residues N58, N66, N74, N116, N126, and N149 are each glycosylated (N-linked (GlcNAc...) asparagine). The 89-residue stretch at S63–T151 folds into the PA domain. N-linked (GlcNAc...) (complex) asparagine glycosylation is present at N155. Residues V173–V193 traverse the membrane as a helical segment. The Cytoplasmic segment spans residues E194 to P220. Residues L221 to Y241 form a helical membrane-spanning segment. At K242–V247 the chain is on the lumenal side. The chain crosses the membrane as a helical span at residues M248–I268. The Cytoplasmic portion of the chain corresponds to H269 to M285. Residues E286–F306 form a helical membrane-spanning segment. Residues R307–R311 are Lumenal-facing. The chain crosses the membrane as a helical span at residues W312 to L332. Topologically, residues K333–C340 are cytoplasmic. Residues V341–I361 traverse the membrane as a helical segment. The active site involves D351. Over T362–S399 the chain is Lumenal. The chain crosses the membrane as a helical span at residues V400–I420. The active site involves D412. Residues A421–Y437 lie on the Cytoplasmic side of the membrane. Residues V438–M458 traverse the membrane as a helical segment. Residues K459–K460 lie on the Lumenal side of the membrane. A helical membrane pass occupies residues G461–W481. The PAL signature appears at P463–L465. Residues R482 to Q520 lie on the Cytoplasmic side of the membrane. The short motif at Y495–M498 is the YXXo lysosomal targeting motif element.

It belongs to the peptidase A22B family. In terms of assembly, interacts with ITM2B. Post-translationally, glycosylated. As to expression, ubiquitous.

The protein localises to the late endosome membrane. Its subcellular location is the lysosome membrane. It is found in the membrane. Its function is as follows. Intramembrane-cleaving aspartic protease (I-CLiP) that cleaves type II membrane signal peptides in the hydrophobic plane of the membrane. Functions in FASLG, ITM2B and TNF processing. Catalyzes the intramembrane cleavage of the anchored fragment of shed TNF-alpha (TNF), which promotes the release of the intracellular domain (ICD) for signaling to the nucleus. Also responsible for the intramembrane cleavage of Fas antigen ligand FASLG, which promotes the release of the intracellular FasL domain (FasL ICD). Essential for degradation of the invariant chain CD74 that plays a central role in the function of antigen-presenting cells in the immune system. Plays a role in the regulation of innate and adaptive immunity. Catalyzes the intramembrane cleavage of the simian foamy virus envelope glycoprotein gp130 independently of prior ectodomain shedding by furin or furin-like proprotein convertase (PC)-mediated cleavage proteolysis. This Homo sapiens (Human) protein is Signal peptide peptidase-like 2A.